The sequence spans 156 residues: 3-hydroxyacyl-[acyl-carrier-protein] dehydratase FabZ (156 aa).

The active site involves H54.

Belongs to the thioester dehydratase family. FabZ subfamily.

The protein localises to the cytoplasm. It carries out the reaction a (3R)-hydroxyacyl-[ACP] = a (2E)-enoyl-[ACP] + H2O. In terms of biological role, involved in unsaturated fatty acids biosynthesis. Catalyzes the dehydration of short chain beta-hydroxyacyl-ACPs and long chain saturated and unsaturated beta-hydroxyacyl-ACPs. This is 3-hydroxyacyl-[acyl-carrier-protein] dehydratase FabZ from Koribacter versatilis (strain Ellin345).